The sequence spans 547 residues: Fumarate reductase (CoM/CoB) subunit A (547 aa).

Belongs to the FAD-dependent oxidoreductase 2 family. In terms of assembly, subunit A of the heterodimeric fumarate reductase of methanogenic Archaea, composed of subunits A (TfrA) and B (TfrB). An oxidized flavin is required as a cofactor.

It is found in the cytoplasm. It carries out the reaction coenzyme B + coenzyme M + fumarate = coenzyme M-coenzyme B heterodisulfide + succinate. In terms of biological role, catalyzes the reduction of fumarate with reduced coenzyme M (CoM-S-H) and coenzyme B (CoB-S-H). In vitro, is able to reduces fumarate with reduced benzyl viologen, oxidize CoM-S-H and CoB-S-H to CoM-S-S-CoB with methylene blue, and reduce CoM-S-S-CoB with reduced benzyl viologen. The enzyme has specificity for the two thiol compounds as the CoB--CoM heterodisulfide reductase. The enzyme is very sensitive to oxygen. The protein is Fumarate reductase (CoM/CoB) subunit A of Methanothermobacter marburgensis (strain ATCC BAA-927 / DSM 2133 / JCM 14651 / NBRC 100331 / OCM 82 / Marburg) (Methanobacterium thermoautotrophicum).